Reading from the N-terminus, the 313-residue chain is Ribosomal RNA small subunit methyltransferase H (313 aa).

S-adenosyl-L-methionine contacts are provided by residues 35-37 (GGH), D55, F80, D102, and Q109.

Belongs to the methyltransferase superfamily. RsmH family.

The protein localises to the cytoplasm. It carries out the reaction cytidine(1402) in 16S rRNA + S-adenosyl-L-methionine = N(4)-methylcytidine(1402) in 16S rRNA + S-adenosyl-L-homocysteine + H(+). Its function is as follows. Specifically methylates the N4 position of cytidine in position 1402 (C1402) of 16S rRNA. The chain is Ribosomal RNA small subunit methyltransferase H from Shewanella violacea (strain JCM 10179 / CIP 106290 / LMG 19151 / DSS12).